A 273-amino-acid chain; its full sequence is DNA repair protein RecO (273 aa).

This sequence belongs to the RecO family.

Involved in DNA repair and RecF pathway recombination. This Saccharopolyspora erythraea (strain ATCC 11635 / DSM 40517 / JCM 4748 / NBRC 13426 / NCIMB 8594 / NRRL 2338) protein is DNA repair protein RecO.